The chain runs to 47 residues: Large ribosomal subunit protein bL34 (47 aa).

This sequence belongs to the bacterial ribosomal protein bL34 family.

The polypeptide is Large ribosomal subunit protein bL34 (Rhodococcus opacus (strain B4)).